The primary structure comprises 327 residues: S-adenosylmethionine/S-adenosylhomocysteine transporter (327 aa).

The next 10 membrane-spanning stretches (helical) occupy residues 22–42, 53–73, 85–105, 114–134, 143–163, 165–185, 202–222, 240–260, 271–291, and 294–314; these read CDMAIFLIFLNAFIWSSSFAL, LFVTGSRMVLAGVVLFGLLLC, IMPIVLLSVIGFYLTNVLEFI, TACFIYGFSPFTAAFCSYVQL, LGGLSLGLVSYLVYLLFGGSE, VAEWGWQLGLPELLLIAATCL, SLSMTAINAYAMVIAGVLSLI, LFLQAIGALVIFSNLICYNLF, FLSFCNLVMPLFASFFGWLLL, and SFPPGLLFAVGFMVLGCRLIY. An EamA 1 domain is found at 34–157; it reads FIWSSSFALS…LGLVSYLVYL (124 aa). One can recognise an EamA 2 domain in the interval 189 to 313; sequence GWTLLRKLGR…GFMVLGCRLI (125 aa).

The protein belongs to the drug/metabolite transporter (DMT) superfamily. 10 TMS drug/metabolite exporter (DME) (TC 2.A.7.3) family.

Its subcellular location is the cell membrane. Its activity is regulated as follows. CCCP treatment reduces SAM intracellular uptake by 50%. Transports S-adenosylmethionine (SAM) and S-adenosylhomocysteine (SAH). Allows bacteria to acquire SAM from the eukaryotic host cell and to likely remove the toxic by-product SAH. This Chlamydia trachomatis serovar L2 (strain ATCC VR-902B / DSM 19102 / 434/Bu) protein is S-adenosylmethionine/S-adenosylhomocysteine transporter.